We begin with the raw amino-acid sequence, 226 residues long: RING-H2 finger protein ATL75 (226 aa).

Residues 60-80 (LMLLSVLICGIICCLGLHYII) traverse the membrane as a helical segment. The segment at 136–178 (CVICLSDFVSGEQIRMLPKCHHGFHVRCIDKWLQQHLTCPKCR) adopts an RING-type; atypical zinc-finger fold.

It belongs to the RING-type zinc finger family. ATL subfamily.

It is found in the membrane. The catalysed reaction is S-ubiquitinyl-[E2 ubiquitin-conjugating enzyme]-L-cysteine + [acceptor protein]-L-lysine = [E2 ubiquitin-conjugating enzyme]-L-cysteine + N(6)-ubiquitinyl-[acceptor protein]-L-lysine.. Its pathway is protein modification; protein ubiquitination. The polypeptide is RING-H2 finger protein ATL75 (ATL75) (Arabidopsis thaliana (Mouse-ear cress)).